The following is a 367-amino-acid chain: Phosphoribosylaminoimidazole-succinocarboxamide synthase (367 aa).

The protein belongs to the SAICAR synthetase family.

It catalyses the reaction 5-amino-1-(5-phospho-D-ribosyl)imidazole-4-carboxylate + L-aspartate + ATP = (2S)-2-[5-amino-1-(5-phospho-beta-D-ribosyl)imidazole-4-carboxamido]succinate + ADP + phosphate + 2 H(+). The protein operates within purine metabolism; IMP biosynthesis via de novo pathway; 5-amino-1-(5-phospho-D-ribosyl)imidazole-4-carboxamide from 5-amino-1-(5-phospho-D-ribosyl)imidazole-4-carboxylate: step 1/2. The polypeptide is Phosphoribosylaminoimidazole-succinocarboxamide synthase (Shewanella putrefaciens (strain CN-32 / ATCC BAA-453)).